The primary structure comprises 795 residues: Probable alpha,alpha-trehalose-phosphate synthase [UDP-forming] 4 (795 aa).

The interval 4–469 (PRLLVVSMSL…WADDFMKLTL (466 aa)) is glycosyltransferase.

This sequence in the N-terminal section; belongs to the glycosyltransferase 20 family. The protein in the C-terminal section; belongs to the trehalose phosphatase family.

The catalysed reaction is D-glucose 6-phosphate + UDP-alpha-D-glucose = alpha,alpha-trehalose 6-phosphate + UDP + H(+). The sequence is that of Probable alpha,alpha-trehalose-phosphate synthase [UDP-forming] 4 (TPS4) from Arabidopsis thaliana (Mouse-ear cress).